Consider the following 628-residue polypeptide: Patulin synthase (628 aa).

The first 20 residues, 1-20 (MRPIPSILGALGAFATLSAA), serve as a signal peptide directing secretion. An N-linked (GlcNAc...) asparagine glycan is attached at N48. FAD is bound by residues 60 to 61 (TA) and 81 to 82 (EA). The N-linked (GlcNAc...) asparagine glycan is linked to N92. FAD is bound at residue 147-150 (NYMA). N-linked (GlcNAc...) asparagine glycans are attached at residues N197, N260, N386, N429, and N486. H564 (proton acceptor) is an active-site residue. Residues A598 and 609 to 610 (PQ) contribute to the FAD site.

It belongs to the GMC oxidoreductase family. In terms of assembly, homodimer. The cofactor is FAD.

The protein resides in the cytoplasm. It localises to the cell cortex. Its subcellular location is the vacuole. The protein localises to the secreted. It is found in the cell wall. It catalyses the reaction (E)-ascladiol + A = patulin + AH2. It functions in the pathway mycotoxin biosynthesis; patulin biosynthesis. Its function is as follows. Patulin synthase; part of the gene cluster that mediates the biosynthesis of patulin, an acetate-derived tetraketide mycotoxin produced by several fungal species that shows antimicrobial properties against several bacteria. PatE catalyzes the last step of the pathway which is the conversion of E-ascladiol to patulin. The pathway begins with the synthesis of 6-methylsalicylic acid by the polyketide synthase (PKS) patK via condensation of acetate and malonate units. The 6-methylsalicylic acid decarboxylase patG then catalyzes the decarboxylation of 6-methylsalicylic acid to yield m-cresol (also known as 3-methylphenol). These first reactions occur in the cytosol. The intermediate m-cresol is then transported into the endoplasmic reticulum where the cytochrome P450 monooxygenase patH converts it to m-hydroxybenzyl alcohol, which is further converted to gentisyl alcohol by the cytochrome P450 monooxygenase patI. The oxidoreductases patJ and patO further convert gentisyl alcohol to isoepoxydon in the vacuole. PatN catalyzes then the transformation of isoepoxydon into phyllostine. The cluster protein patF is responsible for the conversion from phyllostine to neopatulin whereas the alcohol dehydrogenase patD converts neopatulin to E-ascladiol. The steps between isoepoxydon and E-ascladiol occur in the cytosol, and E-ascladiol is probably secreted to the extracellular space by one of the cluster-specific transporters patC or patM. Finally, the secreted patulin synthase patE catalyzes the conversion of E-ascladiol to patulin. This Aspergillus clavatus (strain ATCC 1007 / CBS 513.65 / DSM 816 / NCTC 3887 / NRRL 1 / QM 1276 / 107) protein is Patulin synthase.